The primary structure comprises 318 residues: MMSTLFPTLNLNKDDQLPNFTVSELNDWALITMIGADKKSYLQGQVTCDVVSLAQDEITFGGHCDAKGKLWSIFQLFHHNDGYALFQRKSAIETELTEIKKYAVFSKVDISISDDILLGFTGDKALEWINQHTDSNANVRVSKFGTFAKVSDTQWLLVTTDDKKEELLSLLSEATLCDEAIWSLHHIKHALPQLDDQLCNEHIPQALNLQAINGISFKKGCYTGQETVARAKYRGINKRAMYLLSGISEAQPSAGDAIERSVGENWRKGGTIVSAYRFEDGYTLALAILPNDLDEDTQFKLQESIWEKVELPYTLNDE.

Trp-28 and Trp-182 together coordinate folate.

It belongs to the tRNA-modifying YgfZ family.

The protein localises to the cytoplasm. Functionally, folate-binding protein involved in regulating the level of ATP-DnaA and in the modification of some tRNAs. It is probably a key factor in regulatory networks that act via tRNA modification, such as initiation of chromosomal replication. The chain is tRNA-modifying protein YgfZ from Aliivibrio fischeri (strain MJ11) (Vibrio fischeri).